A 421-amino-acid polypeptide reads, in one-letter code: Bone morphogenetic protein 10 (421 aa).

A signal peptide spans 1 to 21 (MGSLVLPLSAVFCLVAHSASG). Positions 22–313 (SPIMGLEQSP…IDDSSARIRR (292 aa)) are excised as a propeptide. N67 and N131 each carry an N-linked (GlcNAc...) asparagine glycan. 3 cysteine pairs are disulfide-bonded: C320-C386, C349-C418, and C353-C420.

Belongs to the TGF-beta family. Homodimer; disulfide-linked. Interacts with FBN1 (via N-terminal domain) and FBN2. Interacts with ENG. In terms of tissue distribution, in the embryo, expressed exclusively in the ventricular trabecular myocardium of the developing heart from 9.0 dpc-13.5 dpc. By 16.5 dpc-18.5 dpc, only detectable in atria. Highly expressed in the adult heart where it is found in the right atrium but not in the left atrium. Lower levels in adult liver and lung.

Its subcellular location is the secreted. Functionally, required for maintaining the proliferative activity of embryonic cardiomyocytes by preventing premature activation of the negative cell cycle regulator CDKN1C/p57KIP and maintaining the required expression levels of cardiogenic factors such as MEF2C and NKX2-5. Acts as a ligand for ACVRL1/ALK1, BMPR1A/ALK3 and BMPR1B/ALK6, leading to activation of SMAD1, SMAD5 and SMAD8 transcription factors. Inhibits endothelial cell migration and growth. May reduce cell migration and cell matrix adhesion in breast cancer cell lines. The polypeptide is Bone morphogenetic protein 10 (Bmp10) (Mus musculus (Mouse)).